We begin with the raw amino-acid sequence, 411 residues long: Phospholipase ABHD3 (411 aa).

The helical; Signal-anchor for type II membrane protein transmembrane segment at 25–45 (VGFFGSGVGLSLILGFSVAYA) threads the bilayer. The AB hydrolase-1 domain maps to 140–233 (PTILLLPGLT…MLLLNYLGKI (94 aa)). Catalysis depends on charge relay system residues Ser220, Asp346, and His375.

Belongs to the AB hydrolase superfamily. AB hydrolase 4 family. Widely expressed with higher expression in liver.

The protein resides in the membrane. It carries out the reaction a 1,2-diacyl-sn-glycero-3-phosphocholine + H2O = a 1-acyl-sn-glycero-3-phosphocholine + a fatty acid + H(+). The catalysed reaction is a 1,2-diacyl-sn-glycero-3-phosphocholine + H2O = a 2-acyl-sn-glycero-3-phosphocholine + a fatty acid + H(+). It catalyses the reaction 1-tetradecanoyl-2-(9Z,12Z-octadecadienoyl)-sn-glycero-3-phosphocholine + H2O = 2-(9Z,12Z-octadecadienoyl)-sn-glycero-3-phosphocholine + tetradecanoate + H(+). The enzyme catalyses 1-tetradecanoyl-2-(9Z,12Z-octadecadienoyl)-sn-glycero-3-phosphocholine + H2O = 1-tetradecanoyl-sn-glycero-3-phosphocholine + (9Z,12Z)-octadecadienoate + H(+). It carries out the reaction 1-tetradecanoyl-2-(5Z,8Z,11Z,14Z-eicosatetraenoyl)-sn-glycero-3-phosphocholine + H2O = 2-(5Z,8Z,11Z,14Z)-eicosatetraenoyl-sn-glycero-3-phosphocholine + tetradecanoate + H(+). The catalysed reaction is 1-tetradecanoyl-2-(4Z,7Z,10Z,13Z,16Z,19Z-docosahexaenoyl)-sn-glycero-3-phosphocholine + H2O = 2-(4Z,7Z,10Z,13Z,16Z,19Z-docosahexaenoyl)-sn-glycero-3-phosphocholine + tetradecanoate + H(+). It catalyses the reaction 1,2-ditetradecanoyl-sn-glycero-3-phosphocholine + H2O = 2-tetradecanoyl-sn-glycero-3-phosphocholine + tetradecanoate + H(+). The enzyme catalyses 1-octadecanoyl-2-acetyl-sn-glycero-3-phosphocholine + H2O = 1-octadecanoyl-sn-glycero-3-phosphocholine + acetate + H(+). It carries out the reaction 1,2-ditetradecanoyl-sn-glycero-3-phosphocholine + H2O = 1-tetradecanoyl-sn-glycero-3-phosphocholine + tetradecanoate + H(+). The catalysed reaction is 1-octadecanoyl-2-pentanoyl-sn-glycero-3-phosphocholine + H2O = pentanoate + 1-octadecanoyl-sn-glycero-3-phosphocholine + H(+). It catalyses the reaction 1-octadecanoyl-2-hexanoyl-sn-glycero-3-phosphocholine + H2O = hexanoate + 1-octadecanoyl-sn-glycero-3-phosphocholine + H(+). The enzyme catalyses 1-octadecanoyl-2-octanoyl-sn-glycero-3-phosphocholine + H2O = 1-octadecanoyl-sn-glycero-3-phosphocholine + octanoate + H(+). It carries out the reaction 1-octadecanoyl-2-nonanoyl-sn-glycero-3-phosphocholine + H2O = nonanoate + 1-octadecanoyl-sn-glycero-3-phosphocholine + H(+). The catalysed reaction is 1-O-hexadecyl-2-nonadioyl-sn-glycero-3-phosphocholine + H2O = nonanedioate + 1-O-hexadecyl-sn-glycero-3-phosphocholine + H(+). It catalyses the reaction 1-hexadecanoyl-2-nonadioyl-sn-glycero-3-phosphocholine + H2O = nonanedioate + 1-hexadecanoyl-sn-glycero-3-phosphocholine + H(+). The enzyme catalyses 1-hexadecanoyl-2-(9-oxononanoyl)-sn-glycero-3-phosphocholine + H2O = 9-oxononanoate + 1-hexadecanoyl-sn-glycero-3-phosphocholine + H(+). It carries out the reaction 1-hexadecanoyl-2-(5-oxopentanoyl)-sn-glycero-3-phosphocholine + H2O = 5-oxopentanoate + 1-hexadecanoyl-sn-glycero-3-phosphocholine + H(+). The catalysed reaction is 1-hexadecanoyl-2-glutaroyl-sn-glycero-3-phosphocholine + H2O = glutarate + 1-hexadecanoyl-sn-glycero-3-phosphocholine + H(+). It catalyses the reaction 1-O-hexadecyl-2-acetyl-sn-glycero-3-phosphocholine + H2O = 1-O-hexadecyl-sn-glycero-3-phosphocholine + acetate + H(+). Functionally, phospholipase that may play a role in phospholipids remodeling. May selectively cleave myristate (C14)-containing phosphatidylcholines through its predominant phospholipase 1 activity, cleaving preferentially acyl groups in sn1 position. In parallel, may have a minor phospholipase 2 activity acting on acyl groups in position sn2. In addition to (C14)-containing phosphatidylcholines, may also act on other medium-chain-containing and oxidatively truncated phospholipids. The sequence is that of Phospholipase ABHD3 from Mus musculus (Mouse).